The sequence spans 333 residues: Protoheme IX farnesyltransferase (333 aa).

Helical transmembrane passes span 63-83, 109-129, 132-152, 160-180, 188-208, 214-234, 245-265, and 292-312; these read LACTLGGGALAAAAAGVLNCI, AAFIGAISCTLAAAALLVSGV, LAAGLSLLGLCSYVLLYTAIL, IVIGGVAGAIPPLVGAAAASG, WLFSLVMLWTPAHFWALALLL, AVGIPMLPVIQGPVVTVRAIS, GFGVWALPEGGLLYGLLLIPF, and WSIFYMFGICLLLVVSRLPMA.

It belongs to the UbiA prenyltransferase family. Protoheme IX farnesyltransferase subfamily.

The protein resides in the cell inner membrane. The enzyme catalyses heme b + (2E,6E)-farnesyl diphosphate + H2O = Fe(II)-heme o + diphosphate. The protein operates within porphyrin-containing compound metabolism; heme O biosynthesis; heme O from protoheme: step 1/1. Converts heme B (protoheme IX) to heme O by substitution of the vinyl group on carbon 2 of heme B porphyrin ring with a hydroxyethyl farnesyl side group. The polypeptide is Protoheme IX farnesyltransferase (Prochlorococcus marinus (strain MIT 9313)).